The sequence spans 565 residues: CTP synthase (565 aa).

The interval Met1–Leu272 is amidoligase domain. Ser18 provides a ligand contact to CTP. Ser18 provides a ligand contact to UTP. Ser19 to Ile24 is a binding site for ATP. Tyr59 provides a ligand contact to L-glutamine. Asp76 contributes to the ATP binding site. Mg(2+)-binding residues include Asp76 and Glu146. Residues Asp153–Glu155, Lys193–Gln198, and Lys229 contribute to the CTP site. Residues Lys193 to Gln198 and Lys229 contribute to the UTP site. Residues Thr299 to Gly543 enclose the Glutamine amidotransferase type-1 domain. Gly363 is an L-glutamine binding site. Cys390 acts as the Nucleophile; for glutamine hydrolysis in catalysis. L-glutamine-binding positions include Leu391–Gln394, Glu414, and Arg471. Active-site residues include His516 and Glu518.

The protein belongs to the CTP synthase family. In terms of assembly, homotetramer.

The catalysed reaction is UTP + L-glutamine + ATP + H2O = CTP + L-glutamate + ADP + phosphate + 2 H(+). It carries out the reaction L-glutamine + H2O = L-glutamate + NH4(+). The enzyme catalyses UTP + NH4(+) + ATP = CTP + ADP + phosphate + 2 H(+). It participates in pyrimidine metabolism; CTP biosynthesis via de novo pathway; CTP from UDP: step 2/2. Allosterically activated by GTP, when glutamine is the substrate; GTP has no effect on the reaction when ammonia is the substrate. The allosteric effector GTP functions by stabilizing the protein conformation that binds the tetrahedral intermediate(s) formed during glutamine hydrolysis. Inhibited by the product CTP, via allosteric rather than competitive inhibition. In terms of biological role, catalyzes the ATP-dependent amination of UTP to CTP with either L-glutamine or ammonia as the source of nitrogen. Regulates intracellular CTP levels through interactions with the four ribonucleotide triphosphates. The chain is CTP synthase from Pelodictyon phaeoclathratiforme (strain DSM 5477 / BU-1).